A 316-amino-acid chain; its full sequence is 4-hydroxy-3-methylbut-2-enyl diphosphate reductase (316 aa).

C12 is a [4Fe-4S] cluster binding site. H43 and H81 together coordinate (2E)-4-hydroxy-3-methylbut-2-enyl diphosphate. The dimethylallyl diphosphate site is built by H43 and H81. Isopentenyl diphosphate is bound by residues H43 and H81. C103 contributes to the [4Fe-4S] cluster binding site. H131 is a (2E)-4-hydroxy-3-methylbut-2-enyl diphosphate binding site. Residue H131 coordinates dimethylallyl diphosphate. H131 provides a ligand contact to isopentenyl diphosphate. E133 acts as the Proton donor in catalysis. Residue T170 coordinates (2E)-4-hydroxy-3-methylbut-2-enyl diphosphate. C198 contacts [4Fe-4S] cluster. (2E)-4-hydroxy-3-methylbut-2-enyl diphosphate is bound by residues S226, N228, and S271. Residues S226, N228, and S271 each coordinate dimethylallyl diphosphate. Isopentenyl diphosphate-binding residues include S226, N228, and S271.

The protein belongs to the IspH family. Requires [4Fe-4S] cluster as cofactor.

It carries out the reaction isopentenyl diphosphate + 2 oxidized [2Fe-2S]-[ferredoxin] + H2O = (2E)-4-hydroxy-3-methylbut-2-enyl diphosphate + 2 reduced [2Fe-2S]-[ferredoxin] + 2 H(+). It catalyses the reaction dimethylallyl diphosphate + 2 oxidized [2Fe-2S]-[ferredoxin] + H2O = (2E)-4-hydroxy-3-methylbut-2-enyl diphosphate + 2 reduced [2Fe-2S]-[ferredoxin] + 2 H(+). It functions in the pathway isoprenoid biosynthesis; dimethylallyl diphosphate biosynthesis; dimethylallyl diphosphate from (2E)-4-hydroxy-3-methylbutenyl diphosphate: step 1/1. The protein operates within isoprenoid biosynthesis; isopentenyl diphosphate biosynthesis via DXP pathway; isopentenyl diphosphate from 1-deoxy-D-xylulose 5-phosphate: step 6/6. Its function is as follows. Catalyzes the conversion of 1-hydroxy-2-methyl-2-(E)-butenyl 4-diphosphate (HMBPP) into a mixture of isopentenyl diphosphate (IPP) and dimethylallyl diphosphate (DMAPP). Acts in the terminal step of the DOXP/MEP pathway for isoprenoid precursor biosynthesis. This Bacillus anthracis (strain A0248) protein is 4-hydroxy-3-methylbut-2-enyl diphosphate reductase.